The chain runs to 466 residues: Replication termination factor 1 (466 aa).

DNA-binding domain stretches follow at residues 94–249 and 250–421; these read RDYT…LRRK and YNPF…KKTL. HTH myb-type domains are found at residues 251 to 304 and 305 to 363; these read NPFK…QPGE and INRS…SRDI. DNA-binding regions (H-T-H motif) lie at residues 278-300 and 336-359; these read WSLIGKLSNRLPMHCRDHWRDYI and WSLISKNMRNRHRHHCRWKYYTLI.

It localises to the nucleus. Functionally, mediates site-specific replication termination at the polar replication barrier RTS1, a barrier which ensures that replication of the mat1 locus in S.pombe occurs in the centromere-proximal direction. In Schizosaccharomyces pombe (strain 972 / ATCC 24843) (Fission yeast), this protein is Replication termination factor 1 (rtf1).